Reading from the N-terminus, the 505-residue chain is Bifunctional pantoate ligase/cytidylate kinase (505 aa).

Residues 1 to 268 (MHQWRKHQQS…CGETRLIDHT (268 aa)) form a pantoate--beta-alanine ligase region. Residue 18-25 (MGALHRGH) participates in ATP binding. Histidine 25 acts as the Proton donor in catalysis. Glutamine 53 contributes to the (R)-pantoate binding site. Glutamine 53 is a binding site for beta-alanine. 142 to 145 (GEKD) lines the ATP pocket. A (R)-pantoate-binding site is contributed by glutamine 148. ATP contacts are provided by residues valine 171 and 179 to 182 (CSSR). The interval 269 to 505 (FLMSRQPIVA…PEEVWPTAGR (237 aa)) is cytidylate kinase.

In the N-terminal section; belongs to the pantothenate synthetase family. This sequence in the C-terminal section; belongs to the cytidylate kinase family. Type 1 subfamily.

It localises to the cytoplasm. It carries out the reaction (R)-pantoate + beta-alanine + ATP = (R)-pantothenate + AMP + diphosphate + H(+). The enzyme catalyses CMP + ATP = CDP + ADP. It catalyses the reaction dCMP + ATP = dCDP + ADP. Its pathway is cofactor biosynthesis; (R)-pantothenate biosynthesis; (R)-pantothenate from (R)-pantoate and beta-alanine: step 1/1. Functionally, catalyzes the condensation of pantoate with beta-alanine in an ATP-dependent reaction via a pantoyl-adenylate intermediate. In terms of biological role, catalyzes the transfer of a phosphate group from ATP to either CMP or dCMP to form CDP or dCDP and ADP, respectively. The polypeptide is Bifunctional pantoate ligase/cytidylate kinase (Prochlorococcus marinus (strain MIT 9313)).